We begin with the raw amino-acid sequence, 1126 residues long: DNA-directed RNA polymerase subunit Rpo2 (1126 aa).

Residues Cys-1060, Cys-1063, Cys-1078, and His-1081 each coordinate Zn(2+).

The protein belongs to the RNA polymerase beta chain family. As to quaternary structure, part of the 13-subunit RNA polymerase complex. Interacts with TFS4. In terms of assembly, (Microbial infection) Binds viral protein RIP which blocks global transcription. The cofactor is Zn(2+).

It localises to the cytoplasm. It catalyses the reaction RNA(n) + a ribonucleoside 5'-triphosphate = RNA(n+1) + diphosphate. Its function is as follows. DNA-dependent RNA polymerase (RNAP) catalyzes the transcription of DNA into RNA using the four ribonucleoside triphosphates as substrates. This subunit is involved in DNA promoter recognition. This chain is DNA-directed RNA polymerase subunit Rpo2, found in Sulfolobus acidocaldarius (strain ATCC 33909 / DSM 639 / JCM 8929 / NBRC 15157 / NCIMB 11770).